A 416-amino-acid chain; its full sequence is Heat shock protein DDB_G0280215 (416 aa).

In terms of domain architecture, sHSP spans 37–150 (SMDWGWKPRM…SQHISLFGRE (114 aa)). Residues 216-235 (ETKERERRIRDTKGETEKKK) form a disordered region.

This sequence belongs to the small heat shock protein (HSP20) family.

This Dictyostelium discoideum (Social amoeba) protein is Heat shock protein DDB_G0280215.